A 602-amino-acid chain; its full sequence is Elongation factor 4 (602 aa).

A tr-type G domain is found at 8 to 189 (KNIRNFSIIA…KIITTIPAPS (182 aa)). GTP contacts are provided by residues 20–25 (DHGKST) and 136–139 (NKID).

This sequence belongs to the TRAFAC class translation factor GTPase superfamily. Classic translation factor GTPase family. LepA subfamily.

It localises to the cell inner membrane. The catalysed reaction is GTP + H2O = GDP + phosphate + H(+). In terms of biological role, required for accurate and efficient protein synthesis under certain stress conditions. May act as a fidelity factor of the translation reaction, by catalyzing a one-codon backward translocation of tRNAs on improperly translocated ribosomes. Back-translocation proceeds from a post-translocation (POST) complex to a pre-translocation (PRE) complex, thus giving elongation factor G a second chance to translocate the tRNAs correctly. Binds to ribosomes in a GTP-dependent manner. The polypeptide is Elongation factor 4 (Helicobacter pylori (strain G27)).